The primary structure comprises 222 residues: MKGFFITGTDTDVGKTFVTACMLRTLVDKRIRATAYKPVQSGAQWREGKWIAPDVDVYRKVIDVTDEDGCTYLLQTPCSPHLAAKIDGVTIEPDHIVAHVHQLQQTYDFVLVEGAGGIAVPLVDDSFLIAHLAQLLHFPLIIVARASVGTINHTVLTVEYAKAFGLQIAGIIMNGFSTPKNEIEQENIRMIEEMTHVPVIGEIPHMTNFSHQQIVWRKEWWQ.

ATP is bound at residue 12 to 17; sequence DVGKTF. Position 16 (Thr16) interacts with Mg(2+). Lys37 is a catalytic residue. Ser41 is a substrate binding site. ATP is bound by residues Asp54 and 113 to 116; that span reads EGAG. Asp54 and Glu113 together coordinate Mg(2+).

This sequence belongs to the dethiobiotin synthetase family. As to quaternary structure, homodimer. Mg(2+) serves as cofactor.

It is found in the cytoplasm. It catalyses the reaction (7R,8S)-7,8-diammoniononanoate + CO2 + ATP = (4R,5S)-dethiobiotin + ADP + phosphate + 3 H(+). It functions in the pathway cofactor biosynthesis; biotin biosynthesis; biotin from 7,8-diaminononanoate: step 1/2. Catalyzes a mechanistically unusual reaction, the ATP-dependent insertion of CO2 between the N7 and N8 nitrogen atoms of 7,8-diaminopelargonic acid (DAPA, also called 7,8-diammoniononanoate) to form a ureido ring. In Anoxybacillus flavithermus (strain DSM 21510 / WK1), this protein is ATP-dependent dethiobiotin synthetase BioD.